The chain runs to 122 residues: MARIAGVDLPREKRVEVGLTYIYGIGRPKANEILVKTGVNPDTRVRDLTDDEVNKIREIIDKEYKVEGDLRREIALNIKRLTEIGCYRGRRHRMGLPVRGQRTKTNARTRKGPSKPVSGKKK.

The tract at residues histidine 92 to lysine 122 is disordered. Residues glutamine 101 to lysine 122 are compositionally biased toward basic residues.

It belongs to the universal ribosomal protein uS13 family. In terms of assembly, part of the 30S ribosomal subunit. Forms a loose heterodimer with protein S19. Forms two bridges to the 50S subunit in the 70S ribosome.

Functionally, located at the top of the head of the 30S subunit, it contacts several helices of the 16S rRNA. In the 70S ribosome it contacts the 23S rRNA (bridge B1a) and protein L5 of the 50S subunit (bridge B1b), connecting the 2 subunits; these bridges are implicated in subunit movement. Contacts the tRNAs in the A and P-sites. The protein is Small ribosomal subunit protein uS13 of Ruminiclostridium cellulolyticum (strain ATCC 35319 / DSM 5812 / JCM 6584 / H10) (Clostridium cellulolyticum).